The sequence spans 135 residues: Large ribosomal subunit protein uL16c (135 aa).

Belongs to the universal ribosomal protein uL16 family. In terms of assembly, part of the 50S ribosomal subunit.

The protein localises to the plastid. The protein resides in the chloroplast. The chain is Large ribosomal subunit protein uL16c from Lepidium virginicum (Virginia pepperweed).